We begin with the raw amino-acid sequence, 163 residues long: Nucleotide-binding protein Cj0374 (163 aa).

The protein belongs to the YajQ family.

In terms of biological role, nucleotide-binding protein. The protein is Nucleotide-binding protein Cj0374 of Campylobacter jejuni subsp. jejuni serotype O:2 (strain ATCC 700819 / NCTC 11168).